The sequence spans 190 residues: Translation initiation factor IF-3 (190 aa).

Belongs to the IF-3 family. As to quaternary structure, monomer.

It is found in the cytoplasm. Its function is as follows. IF-3 binds to the 30S ribosomal subunit and shifts the equilibrium between 70S ribosomes and their 50S and 30S subunits in favor of the free subunits, thus enhancing the availability of 30S subunits on which protein synthesis initiation begins. The polypeptide is Translation initiation factor IF-3 (Prochlorococcus marinus (strain MIT 9301)).